Reading from the N-terminus, the 289-residue chain is Ribosomal RNA small subunit methyltransferase I (289 aa).

It belongs to the methyltransferase superfamily. RsmI family.

It is found in the cytoplasm. The catalysed reaction is cytidine(1402) in 16S rRNA + S-adenosyl-L-methionine = 2'-O-methylcytidine(1402) in 16S rRNA + S-adenosyl-L-homocysteine + H(+). In terms of biological role, catalyzes the 2'-O-methylation of the ribose of cytidine 1402 (C1402) in 16S rRNA. The sequence is that of Ribosomal RNA small subunit methyltransferase I from Helicobacter pylori (strain J99 / ATCC 700824) (Campylobacter pylori J99).